The chain runs to 210 residues: Calcium-activated potassium channel subunit beta-4 (210 aa).

Residues 1 to 19 (MAKLRVAYEYTEAEDKSIR) lie on the Cytoplasmic side of the membrane. Residues 20-40 (LGLFLIISGVVSLFIFGFCWL) traverse the membrane as a helical segment. The Extracellular portion of the chain corresponds to 41–167 (SPALQDLQAT…DVLLHRTHDE (127 aa)). N-linked (GlcNAc...) asparagine glycosylation is found at asparagine 53 and asparagine 90. A helical transmembrane segment spans residues 168–188 (IVLLHCFLWPLVTFVVGVLIV). Topologically, residues 189–210 (VLTICAKSLAVKAEAMKKRKFS) are cytoplasmic.

The protein belongs to the KCNMB (TC 8.A.14.1) family. KCNMB4 subfamily. Interacts with KCNMA1 tetramer. There are probably 4 molecules of KCMNB4 per KCNMA1 tetramer. Interacts with FMR1 (via N-terminus). In terms of processing, phosphorylated. Phosphorylation modulates its effect on KCNMA1 activation kinetics. N-glycosylated. A highly glycosylated form is promoted by KCNMA1. Glycosylation, which is not required for the interaction with KCNMA1 and subcellular location, increases protection against charybdotoxin. In terms of tissue distribution, predominantly expressed in brain. In brain, it is expressed in the cerebellum, cerebral cortex, medulla, spinal cord, occipital pole, frontal lobe, temporal lobe, putamen, amygdala, caudate nucleus, corpus callosum, hippocampus, substantia nigra and thalamus. Weakly or not expressed in other tissues.

It is found in the membrane. In terms of biological role, regulatory subunit of the calcium activated potassium KCNMA1 (maxiK) channel. Modulates the calcium sensitivity and gating kinetics of KCNMA1, thereby contributing to KCNMA1 channel diversity. Decreases the gating kinetics and calcium sensitivity of the KCNMA1 channel, but with fast deactivation kinetics. May decrease KCNMA1 channel openings at low calcium concentrations but increases channel openings at high calcium concentrations. Makes KCNMA1 channel resistant to 100 nM charybdotoxin (CTX) toxin concentrations. The protein is Calcium-activated potassium channel subunit beta-4 (KCNMB4) of Homo sapiens (Human).